The chain runs to 1246 residues: Probable membrane antigen 3 (1246 aa).

It localises to the virion tegument. The polypeptide is Probable membrane antigen 3 (3) (Saimiri sciureus (Common squirrel monkey)).